The sequence spans 278 residues: Protein Rv2133c (278 aa).

The chain is Protein Rv2133c from Mycobacterium tuberculosis (strain ATCC 25618 / H37Rv).